Here is a 757-residue protein sequence, read N- to C-terminus: MDVNPTLLFLKVPAQNAISTTFPYTGDPPYSHGTGTGYTMDTVNRTHQYSERGRWTKNTETGAPQLNPIDGPLPKDNEPSGYAQTDCVLEAMAFLEESHPGIFENSCIETMEVVQQTRVDKLTQGRQTYDWTLNRNQPAATALANTIEVFRSNGLIANESGRLIDFLKDVMESMDRDEIEVTTHFQRKRRVRDNVTKKMVTQRTIGKKKHKLDKRSYLIRALTLNTMTKDAERGKLKRRAIATPGMQIRGFVYFVETLARSICEKLEQSGLPVGGNEKKAKLANVVRKMMTNSQDTEISFTITGDNTKWNENQNPRMFLAMITYITKNQPEWFRNILSIAPIMFSNKMARLGKGYMFESKSMKLRTQIPAEMLANIDLKYFNDSTKKKIEKIRPLLIDGTASLSPGMMMGMFNMLSTVLGVSILNLGQKRYTKTTYWWDGLQSSDDFALIVNAPNYAGIQAGVDRFYRTCKLLGINMSKKKSYINKTGTFEFTSFFYRYGFVANFSMELPSFGVSGVNESADMSIGVTVIKNNMINNDLGPATAQMALQLFIKDYRYTYRCHRGDTQIQTRRSFEIKKLWDQTRSKAGLLVSDGGPNLYNIRNLHIPEVCLKWELMDEDYQGRLCNPLNPFVSHKEIESVNNAVMMPAHGPAKNMEYDAVATTHSWVPKRNRSILNTSQRGILEDEQMYQRCCNLFEKFFPSSSYRRPVGISSMVEAMVSRARIDARIDFESGRTKKEEFAEIMKTCSTIEDLRRQK.

Residues 53–82 (GRWTKNTETGAPQLNPIDGPLPKDNEPSGY) form a disordered region. 2 consecutive short sequence motifs (nuclear localization signal) follow at residues 187-195 (RKRRVRDNV) and 203-216 (RTIGKKKHKLDKRS). The interval 249-256 (RGFVYFVE) is promoter-binding site. The region spanning 286–483 (VRKMMTNSQD…GINMSKKKSY (198 aa)) is the RdRp catalytic domain.

Belongs to the influenza viruses polymerase PB1 family. As to quaternary structure, influenza RNA polymerase is composed of three subunits: PB1, PB2 and PA. Interacts (via N-terminus) with PA (via C-terminus). Interacts (via C-terminus) with PB2 (via N-terminus); this interaction is essential for transcription initiation. Interacts (via C-terminus) with human PKP2 (via N-terminus); the interaction competitively inhibits the interaction between the RNA polymerase subunits PB1 and PB2. Phosphorylated by host PRKCA.

The protein localises to the host nucleus. Its subcellular location is the host cytoplasm. The catalysed reaction is RNA(n) + a ribonucleoside 5'-triphosphate = RNA(n+1) + diphosphate. Its function is as follows. RNA-dependent RNA polymerase which is responsible for replication and transcription of virus RNA segments. The transcription of viral mRNAs occurs by a unique mechanism called cap-snatching. 5' methylated caps of cellular mRNAs are cleaved after 10-13 nucleotides by PA. In turn, these short capped RNAs are used as primers by PB1 for transcription of viral mRNAs. During virus replication, PB1 initiates RNA synthesis and copy vRNA into complementary RNA (cRNA) which in turn serves as a template for the production of more vRNAs. This Influenza A virus (strain A/New Zealand:South Canterbury/35/2000 H1N1) protein is RNA-directed RNA polymerase catalytic subunit.